We begin with the raw amino-acid sequence, 469 residues long: Chromosomal replication initiator protein DnaA (469 aa).

A domain I, interacts with DnaA modulators region spans residues 1–83 (MSEWDYKIFW…KKISIDFIIK (83 aa)). The interval 83 to 128 (KPNTSEDLSKAENEGGNDKKEDAAKPSSAESKKKSVKTEGGRGQHP) is domain II. The interval 89–131 (DLSKAENEGGNDKKEDAAKPSSAESKKKSVKTEGGRGQHPDLR) is disordered. The tract at residues 129 to 344 (DLRPEYNFED…AALTKLIAYT (216 aa)) is domain III, AAA+ region. ATP contacts are provided by Gly-173, Gly-175, Lys-176, and Thr-177. The segment at 345–469 (ELTKKTMDEA…RNTIKENTNK (125 aa)) is domain IV, binds dsDNA.

Belongs to the DnaA family. In terms of assembly, oligomerizes as a right-handed, spiral filament on DNA at oriC.

The protein localises to the cytoplasm. Plays an essential role in the initiation and regulation of chromosomal replication. ATP-DnaA binds to the origin of replication (oriC) to initiate formation of the DNA replication initiation complex once per cell cycle. Binds the DnaA box (a 9 base pair repeat at the origin) and separates the double-stranded (ds)DNA. Forms a right-handed helical filament on oriC DNA; dsDNA binds to the exterior of the filament while single-stranded (ss)DNA is stabiized in the filament's interior. The ATP-DnaA-oriC complex binds and stabilizes one strand of the AT-rich DNA unwinding element (DUE), permitting loading of DNA polymerase. After initiation quickly degrades to an ADP-DnaA complex that is not apt for DNA replication. Binds acidic phospholipids. This chain is Chromosomal replication initiator protein DnaA, found in Treponema denticola (strain ATCC 35405 / DSM 14222 / CIP 103919 / JCM 8153 / KCTC 15104).